Reading from the N-terminus, the 325-residue chain is GMP reductase (325 aa).

Residue cysteine 173 is the Thioimidate intermediate of the active site. Position 202–225 (202–225) interacts with NADP(+); sequence IIADGGIHEHGDIAKSIRFGATMV.

The protein belongs to the IMPDH/GMPR family. GuaC type 2 subfamily.

It carries out the reaction IMP + NH4(+) + NADP(+) = GMP + NADPH + 2 H(+). Catalyzes the irreversible NADPH-dependent deamination of GMP to IMP. It functions in the conversion of nucleobase, nucleoside and nucleotide derivatives of G to A nucleotides, and in maintaining the intracellular balance of A and G nucleotides. The chain is GMP reductase from Albidiferax ferrireducens (strain ATCC BAA-621 / DSM 15236 / T118) (Rhodoferax ferrireducens).